The sequence spans 277 residues: Bis(5'-nucleosyl)-tetraphosphatase, symmetrical (277 aa).

It belongs to the Ap4A hydrolase family.

It carries out the reaction P(1),P(4)-bis(5'-adenosyl) tetraphosphate + H2O = 2 ADP + 2 H(+). Functionally, hydrolyzes diadenosine 5',5'''-P1,P4-tetraphosphate to yield ADP. This chain is Bis(5'-nucleosyl)-tetraphosphatase, symmetrical, found in Chromobacterium violaceum (strain ATCC 12472 / DSM 30191 / JCM 1249 / CCUG 213 / NBRC 12614 / NCIMB 9131 / NCTC 9757 / MK).